Here is a 245-residue protein sequence, read N- to C-terminus: Ribosomal RNA large subunit methyltransferase E (245 aa).

S-adenosyl-L-methionine is bound by residues Gly58, Trp60, Asp78, Asp96, and Asp123. Lys163 (proton acceptor) is an active-site residue.

This sequence belongs to the class I-like SAM-binding methyltransferase superfamily. RNA methyltransferase RlmE family.

Its subcellular location is the cytoplasm. The enzyme catalyses uridine(2552) in 23S rRNA + S-adenosyl-L-methionine = 2'-O-methyluridine(2552) in 23S rRNA + S-adenosyl-L-homocysteine + H(+). Specifically methylates the uridine in position 2552 of 23S rRNA at the 2'-O position of the ribose in the fully assembled 50S ribosomal subunit. In Methanocaldococcus jannaschii (strain ATCC 43067 / DSM 2661 / JAL-1 / JCM 10045 / NBRC 100440) (Methanococcus jannaschii), this protein is Ribosomal RNA large subunit methyltransferase E.